An 875-amino-acid chain; its full sequence is Cytosolic phospholipase A2 epsilon (875 aa).

The disordered stretch occupies residues 16-70; sequence THASEGHHGLGTSMLVPKNPQGEEDSKLGRNCSGFEDAQDPQTAVPSSPLLSMAS. The C2 domain occupies 60 to 183; the sequence is VPSSPLLSMA…CLRNKTHVKF (124 aa). A compositionally biased stretch (low complexity) spans 61-70; sequence PSSPLLSMAS. Residues Asp-97, Asp-103, Asp-153, Asp-155, and Asp-161 each coordinate Ca(2+). Positions 332–875 constitute a PLA2c domain; it reads PCSDTLDVRL…KKRMRSQCPS (544 aa). Ser-420 serves as the catalytic Nucleophile. The active-site Proton acceptor is the Asp-708. Ser-808 is modified (phosphoserine). The segment at 865–875 is required for localization at membrane structures; that stretch reads EKKRMRSQCPS.

It depends on Ca(2+) as a cofactor. Predominantly expressed in brain, heart, skeletal muscle, testis and thyroid. Expressed in neurons but not astrocytes or microglia. Expressed at lower level in stomach.

The protein localises to the cytoplasm. It localises to the cytosol. Its subcellular location is the early endosome membrane. The protein resides in the lysosome membrane. It is found in the cell membrane. It catalyses the reaction a 1,2-diacyl-sn-glycero-3-phosphoethanolamine + a 1,2-diacyl-sn-glycero-3-phosphocholine = an N-acyl-1,2-diacyl-sn-glycero-3-phosphoethanolamine + a 2-acyl-sn-glycero-3-phosphocholine + H(+). The catalysed reaction is 1-hexadecanoyl-2-octadecanoyl-sn-glycero-3-phosphocholine + 1,2-di-(9Z-octadecenoyl)-sn-glycero-3-phosphoethanolamine = 2-octadecanoyl-sn-glycero-3-phosphocholine + N-hexadecanoyl-1,2-di-(9Z-octadecenoyl)-sn-glycero-3-phosphoethanolamine + H(+). The enzyme catalyses 1-octadecanoyl-2-hexadecanoyl-sn-glycero-3-phosphocholine + 1,2-di-(9Z-octadecenoyl)-sn-glycero-3-phosphoethanolamine = N-octadecanoyl-1,2-di-(9Z-octadecenoyl)-sn-glycero-3-phosphoethanolamine + 2-hexadecanoyl-sn-glycero-3-phosphocholine + H(+). It carries out the reaction 1,2-di-(9Z-octadecenoyl)-sn-glycero-3-phosphoethanolamine + 1,2-dihexadecanoyl-sn-glycero-3-phosphocholine = N-hexadecanoyl-1,2-di-(9Z-octadecenoyl)-sn-glycero-3-phosphoethanolamine + 2-hexadecanoyl-sn-glycero-3-phosphocholine + H(+). It catalyses the reaction 1,2-di-(5Z,8Z,11Z,14Z-eicosatetraenoyl)-sn-glycero-3-phosphocholine + 1,2-di-(9Z-octadecenoyl)-sn-glycero-3-phosphoethanolamine = N-(5Z,8Z,11Z,14Z-eicosatetraenoyl)-1,2-di-(9Z-octadecenoyl)-sn-glycero-3-phosphoethanolamine + 2-(5Z,8Z,11Z,14Z)-eicosatetraenoyl-sn-glycero-3-phosphocholine + H(+). The catalysed reaction is 2 1,2-di-(9Z-octadecenoyl)-sn-glycero-3-phosphoethanolamine = N,1,2-tri-(9Z-octadecenoyl)-sn-glycero-3-phosphoethanolamine + 2-(9Z-octadecenoyl)-sn-glycero-3-phosphoethanolamine + H(+). The enzyme catalyses a 1,2-diacyl-sn-glycero-3-phosphocholine + H2O = a 1-acyl-sn-glycero-3-phosphocholine + a fatty acid + H(+). It carries out the reaction 1-(1Z-octadecenyl)-2-(9Z-octadecenoyl)-sn-glycero-3-phosphoethanolamine + 1,2-dihexadecanoyl-sn-glycero-3-phosphocholine = 1-O-(1Z-octadecenoyl)-2-(9Z-octadecenoyl)-sn-glycero-3-phospho-N-hexadecanoyl-ethanolamine + 2-hexadecanoyl-sn-glycero-3-phosphocholine + H(+). It catalyses the reaction 1-hexadecanoyl-2-(5Z,8Z,11Z,14Z-eicosatetraenoyl)-sn-glycero-3-phosphocholine + H2O = 1-hexadecanoyl-sn-glycero-3-phosphocholine + (5Z,8Z,11Z,14Z)-eicosatetraenoate + H(+). The catalysed reaction is 1-hexadecanoyl-sn-glycero-3-phosphocholine + H2O = sn-glycerol 3-phosphocholine + hexadecanoate + H(+). Stimulated by cytosolic Ca(2+). Stimulated by anionic phospholipids such as phosphatidylserine. Calcium-dependent N-acyltransferase involved in the biosynthesis of N-acyl ethanolamines (NAEs) in the brain. Transfers the sn-1 fatty acyl chain of phosphatidylcholine (fatty acyl donor) to the amine group of phosphatidylethanolamine (fatty acyl acceptor) to generate N-acyl phosphatidylethanolamine (NAPE). Similarly can use plasmenylethanolamine as a fatty acyl acceptor to form N-acyl plasmenylethanolamine (N-Acyl-PlsEt). Both NAPE and N-Acyl-PlsEt can serve as precursors of bioactive NAEs like N-arachidonoyl phosphatidylethanolamine also called anandamide. Has weak phospholipase A2 and lysophospholipase activities. Regulates intracellular membrane trafficking that requires modulation of membrane curvature as it occurs by enrichment in lysophospholipids. Promotes tubule formation involved in clathrin-independent endocytotic trafficking and cargo recycling. The chain is Cytosolic phospholipase A2 epsilon (Pla2g4e) from Mus musculus (Mouse).